The following is a 339-amino-acid chain: DNA-directed RNA polymerase RPB7 homolog (339 aa).

The protein belongs to the Asfivirus DNA-directed RNA polymerase RPB7 homolog family. Part of the viral DNA-directed RNA polymerase that consists of 8 polII-like subunits (RPB1, RPB2, RPB3, RPB5, RPB6, RPB7, RPB9, RPB10), a capping enzyme and a termination factor.

It localises to the host cytoplasm. It is found in the virion. Functionally, component of the DNA-directed RNA polymerase (RNAP) that catalyzes the transcription in the cytoplasm of viral DNA into RNA using the four ribonucleoside triphosphates as substrates. This Ornithodoros (relapsing fever ticks) protein is DNA-directed RNA polymerase RPB7 homolog.